A 396-amino-acid chain; its full sequence is S-adenosylmethionine synthase (396 aa).

Residue His-16 coordinates ATP. A Mg(2+)-binding site is contributed by Asp-18. Residue Glu-44 coordinates K(+). Glu-57 and Gln-100 together coordinate L-methionine. Positions 100-110 (QSVDINQGVDR) are flexible loop. ATP-binding positions include 165–167 (DAK), Asp-240, 246–247 (RK), Ala-263, and Lys-267. Asp-240 contacts L-methionine. Lys-271 is a binding site for L-methionine.

Belongs to the AdoMet synthase family. As to quaternary structure, homotetramer; dimer of dimers. Mg(2+) is required as a cofactor. Requires K(+) as cofactor.

The protein resides in the cytoplasm. The catalysed reaction is L-methionine + ATP + H2O = S-adenosyl-L-methionine + phosphate + diphosphate. The protein operates within amino-acid biosynthesis; S-adenosyl-L-methionine biosynthesis; S-adenosyl-L-methionine from L-methionine: step 1/1. Functionally, catalyzes the formation of S-adenosylmethionine (AdoMet) from methionine and ATP. The overall synthetic reaction is composed of two sequential steps, AdoMet formation and the subsequent tripolyphosphate hydrolysis which occurs prior to release of AdoMet from the enzyme. The chain is S-adenosylmethionine synthase from Pseudomonas aeruginosa (strain UCBPP-PA14).